The sequence spans 271 residues: S-adenosylmethionine decarboxylase proenzyme (271 aa).

The active-site Schiff-base intermediate with substrate; via pyruvic acid is serine 121. Serine 121 carries the pyruvic acid (Ser); by autocatalysis modification. Catalysis depends on histidine 126, which acts as the Proton acceptor; for processing activity. The active-site Proton donor; for catalytic activity is the cysteine 149.

This sequence belongs to the prokaryotic AdoMetDC family. Type 2 subfamily. In terms of assembly, heterooctamer of four alpha and four beta chains arranged as a tetramer of alpha/beta heterodimers. Pyruvate is required as a cofactor. In terms of processing, is synthesized initially as an inactive proenzyme. Formation of the active enzyme involves a self-maturation process in which the active site pyruvoyl group is generated from an internal serine residue via an autocatalytic post-translational modification. Two non-identical subunits are generated from the proenzyme in this reaction, and the pyruvate is formed at the N-terminus of the alpha chain, which is derived from the carboxyl end of the proenzyme. The post-translation cleavage follows an unusual pathway, termed non-hydrolytic serinolysis, in which the side chain hydroxyl group of the serine supplies its oxygen atom to form the C-terminus of the beta chain, while the remainder of the serine residue undergoes an oxidative deamination to produce ammonia and the pyruvoyl group blocking the N-terminus of the alpha chain.

The catalysed reaction is S-adenosyl-L-methionine + H(+) = S-adenosyl 3-(methylsulfanyl)propylamine + CO2. The protein operates within amine and polyamine biosynthesis; S-adenosylmethioninamine biosynthesis; S-adenosylmethioninamine from S-adenosyl-L-methionine: step 1/1. In terms of biological role, catalyzes the decarboxylation of S-adenosylmethionine to S-adenosylmethioninamine (dcAdoMet), the propylamine donor required for the synthesis of the polyamines spermine and spermidine from the diamine putrescine. The chain is S-adenosylmethionine decarboxylase proenzyme from Clostridium perfringens (strain SM101 / Type A).